Consider the following 126-residue polypeptide: uncharacterized protein (126 aa).

The protein belongs to the SufE family.

This is an uncharacterized protein from Haemophilus influenzae (strain ATCC 51907 / DSM 11121 / KW20 / Rd).